The chain runs to 135 residues: Large ribosomal subunit protein uL22 (135 aa).

This sequence belongs to the universal ribosomal protein uL22 family. In terms of assembly, part of the 50S ribosomal subunit.

This protein binds specifically to 23S rRNA; its binding is stimulated by other ribosomal proteins, e.g. L4, L17, and L20. It is important during the early stages of 50S assembly. It makes multiple contacts with different domains of the 23S rRNA in the assembled 50S subunit and ribosome. Its function is as follows. The globular domain of the protein is located near the polypeptide exit tunnel on the outside of the subunit, while an extended beta-hairpin is found that lines the wall of the exit tunnel in the center of the 70S ribosome. The chain is Large ribosomal subunit protein uL22 from Christiangramia forsetii (strain DSM 17595 / CGMCC 1.15422 / KT0803) (Gramella forsetii).